A 264-amino-acid chain; its full sequence is MVKSHIGSWILVLFVAMWSDVGLCKKRPKPGGGWNTGGSRYPGQGSPGGNRYPPQGGGSWGQPHGGGWGQPHGGSWGQPHGGGWGQPHGGGWGQPHGGGGWGQGGTHGQWNKPSKPKTNMKHVAGAAAAGAVVGGLGGYMLGSAMNRPLIHFGNDYEDRYYRENMHRYPNQVYYRPVDQYSNQNNFVRDCVNITVKEHTVTTTTKGENFTETDIKMMERVVEQMCITQYQTESQAYYQRGASVVLFSSPPVVLLISFLIFLIVG.

An N-terminal signal peptide occupies residues 1–24 (MVKSHIGSWILVLFVAMWSDVGLC). An interaction with GRB2, ERI3 and SYN1 region spans residues 25–241 (KKRPKPGGGW…ESQAYYQRGA (217 aa)). Positions 28-118 (PKPGGGWNTG…QWNKPSKPKT (91 aa)) are disordered. A run of 6 repeats spans residues 54-62 (PQGGGSWGQ), 63-70 (PHGGGWGQ), 71-78 (PHGGSWGQ), 79-86 (PHGGGWGQ), 87-94 (PHGGGWGQ), and 95-103 (PHGGGGWGQ). The 6 X 8 AA tandem repeats of P-H-G-G-G-W-G-Q stretch occupies residues 54–103 (PQGGGSWGQPHGGGWGQPHGGSWGQPHGGGWGQPHGGGWGQPHGGGGWGQ). A compositionally biased stretch (gly residues) spans 55–107 (QGGGSWGQPHGGGWGQPHGGSWGQPHGGGWGQPHGGGWGQPHGGGGWGQGGTH). 12 residues coordinate Cu(2+): His-72, Gly-73, Gly-74, His-80, Gly-81, Gly-82, His-88, Gly-89, Gly-90, His-96, Gly-98, and Gly-99. Cys-190 and Cys-225 form a disulfide bridge. Residues Asn-192 and Asn-208 are each glycosylated (N-linked (GlcNAc...) asparagine). The GPI-anchor amidated alanine moiety is linked to residue Ala-241. The propeptide at 242–264 (SVVLFSSPPVVLLISFLIFLIVG) is removed in mature form.

This sequence belongs to the prion family. In terms of assembly, monomer and homodimer. Has a tendency to aggregate into amyloid fibrils containing a cross-beta spine, formed by a steric zipper of superposed beta-strands. Soluble oligomers may represent an intermediate stage on the path to fibril formation. Copper binding may promote oligomerization. Interacts with GRB2, APP, ERI3/PRNPIP and SYN1. Mislocalized cytosolically exposed PrP interacts with MGRN1; this interaction alters MGRN1 subcellular location and causes lysosomal enlargement. Interacts with KIAA1191.

It is found in the cell membrane. The protein resides in the golgi apparatus. In terms of biological role, its primary physiological function is unclear. Has cytoprotective activity against internal or environmental stresses. May play a role in neuronal development and synaptic plasticity. May be required for neuronal myelin sheath maintenance. May play a role in iron uptake and iron homeostasis. Soluble oligomers are toxic to cultured neuroblastoma cells and induce apoptosis (in vitro). Association with GPC1 (via its heparan sulfate chains) targets PRNP to lipid rafts. Also provides Cu(2+) or Zn(2+) for the ascorbate-mediated GPC1 deaminase degradation of its heparan sulfate side chains. In Boselaphus tragocamelus (Nilgai), this protein is Major prion protein (PRNP).